The sequence spans 230 residues: Sugar fermentation stimulation protein homolog (230 aa).

This sequence belongs to the SfsA family.

This Clostridium botulinum (strain Okra / Type B1) protein is Sugar fermentation stimulation protein homolog.